A 338-amino-acid polypeptide reads, in one-letter code: UDP-3-O-acylglucosamine N-acyltransferase (338 aa).

Catalysis depends on His251, which acts as the Proton acceptor.

This sequence belongs to the transferase hexapeptide repeat family. LpxD subfamily. As to quaternary structure, homotrimer.

The enzyme catalyses a UDP-3-O-[(3R)-3-hydroxyacyl]-alpha-D-glucosamine + a (3R)-hydroxyacyl-[ACP] = a UDP-2-N,3-O-bis[(3R)-3-hydroxyacyl]-alpha-D-glucosamine + holo-[ACP] + H(+). The protein operates within bacterial outer membrane biogenesis; LPS lipid A biosynthesis. Its function is as follows. Catalyzes the N-acylation of UDP-3-O-acylglucosamine using 3-hydroxyacyl-ACP as the acyl donor. Is involved in the biosynthesis of lipid A, a phosphorylated glycolipid that anchors the lipopolysaccharide to the outer membrane of the cell. This chain is UDP-3-O-acylglucosamine N-acyltransferase, found in Psychrobacter cryohalolentis (strain ATCC BAA-1226 / DSM 17306 / VKM B-2378 / K5).